The primary structure comprises 320 residues: Serpentine receptor class delta-28 (320 aa).

The next 7 helical transmembrane spans lie at 5 to 25 (LLHT…MYLA), 38 to 58 (AIIT…FFVM), 83 to 103 (ACYI…IWMI), 122 to 142 (SLVF…ATWI), 176 to 196 (LTLI…YAWI), 230 to 250 (FLPS…TQLI), and 258 to 278 (LVSV…ILFV).

This sequence belongs to the nematode receptor-like protein srd family.

Its subcellular location is the membrane. This is Serpentine receptor class delta-28 (srd-28) from Caenorhabditis elegans.